The following is a 451-amino-acid chain: UPF0210 protein CA_C0479 (451 aa).

This sequence belongs to the UPF0210 family. As to quaternary structure, homodimer.

This chain is UPF0210 protein CA_C0479, found in Clostridium acetobutylicum (strain ATCC 824 / DSM 792 / JCM 1419 / IAM 19013 / LMG 5710 / NBRC 13948 / NRRL B-527 / VKM B-1787 / 2291 / W).